Here is a 282-residue protein sequence, read N- to C-terminus: Large ribosomal subunit protein uL2 (282 aa).

Disordered regions lie at residues 31-56 and 226-282; these read EKSLLDSQSHSAGRNNAGKMTVRHRG and SVMN…GSKM. The segment covering 35 to 44 has biased composition (polar residues); that stretch reads LDSQSHSAGR. A compositionally biased stretch (basic residues) spans 257–266; sequence TVGKKTRSKK.

It belongs to the universal ribosomal protein uL2 family. In terms of assembly, part of the 50S ribosomal subunit. Forms a bridge to the 30S subunit in the 70S ribosome.

In terms of biological role, one of the primary rRNA binding proteins. Required for association of the 30S and 50S subunits to form the 70S ribosome, for tRNA binding and peptide bond formation. It has been suggested to have peptidyltransferase activity; this is somewhat controversial. Makes several contacts with the 16S rRNA in the 70S ribosome. The chain is Large ribosomal subunit protein uL2 from Levilactobacillus brevis (strain ATCC 367 / BCRC 12310 / CIP 105137 / JCM 1170 / LMG 11437 / NCIMB 947 / NCTC 947) (Lactobacillus brevis).